A 234-amino-acid polypeptide reads, in one-letter code: Uridylate kinase (234 aa).

An ATP-binding site is contributed by 9-12 (KLSG). G51 provides a ligand contact to UMP. 2 residues coordinate ATP: G52 and R56. UMP is bound by residues D71 and 132-139 (CGNPFFTT). Positions 159, 165, and 168 each coordinate ATP.

This sequence belongs to the UMP kinase family. Homohexamer.

It is found in the cytoplasm. The enzyme catalyses UMP + ATP = UDP + ADP. It functions in the pathway pyrimidine metabolism; CTP biosynthesis via de novo pathway; UDP from UMP (UMPK route): step 1/1. Inhibited by UTP. Its function is as follows. Catalyzes the reversible phosphorylation of UMP to UDP. In Prochlorococcus marinus (strain AS9601), this protein is Uridylate kinase.